A 442-amino-acid polypeptide reads, in one-letter code: tRNA-2-methylthio-N(6)-dimethylallyladenosine synthase (442 aa).

In terms of domain architecture, MTTase N-terminal spans 2 to 120; sequence KKVFIRTFGC…LPKMIVDKET (119 aa). Residues C11, C49, C83, C157, C161, and C164 each contribute to the [4Fe-4S] cluster site. A Radical SAM core domain is found at 143 to 375; it reads RVEGGAAFVS…NEVIEAETAR (233 aa). Residues 378-441 enclose the TRAM domain; that stretch reads QTMIGTVQRC…TFSLRGKVVE (64 aa).

Belongs to the methylthiotransferase family. MiaB subfamily. As to quaternary structure, monomer. The cofactor is [4Fe-4S] cluster.

It is found in the cytoplasm. The catalysed reaction is N(6)-dimethylallyladenosine(37) in tRNA + (sulfur carrier)-SH + AH2 + 2 S-adenosyl-L-methionine = 2-methylsulfanyl-N(6)-dimethylallyladenosine(37) in tRNA + (sulfur carrier)-H + 5'-deoxyadenosine + L-methionine + A + S-adenosyl-L-homocysteine + 2 H(+). In terms of biological role, catalyzes the methylthiolation of N6-(dimethylallyl)adenosine (i(6)A), leading to the formation of 2-methylthio-N6-(dimethylallyl)adenosine (ms(2)i(6)A) at position 37 in tRNAs that read codons beginning with uridine. The chain is tRNA-2-methylthio-N(6)-dimethylallyladenosine synthase from Neisseria meningitidis serogroup C (strain 053442).